Here is a 230-residue protein sequence, read N- to C-terminus: Ureidoacrylate amidohydrolase RutB (230 aa).

Residue aspartate 24 is the Proton acceptor of the active site. Lysine 133 is a catalytic residue. Cysteine 166 acts as the Nucleophile in catalysis.

The protein belongs to the isochorismatase family. RutB subfamily.

The enzyme catalyses (Z)-3-ureidoacrylate + H2O + H(+) = (Z)-3-aminoacrylate + NH4(+) + CO2. It carries out the reaction (Z)-3-ureidoacrylate + H2O = (Z)-3-aminoacrylate + carbamate + H(+). The catalysed reaction is (Z)-2-methylureidoacrylate + H2O + H(+) = (Z)-2-methylaminoacrylate + NH4(+) + CO2. Functionally, hydrolyzes ureidoacrylate to form aminoacrylate and carbamate. The carbamate hydrolyzes spontaneously, thereby releasing one of the nitrogen atoms of the pyrimidine ring as ammonia and one of its carbon atoms as CO2. In Escherichia coli O127:H6 (strain E2348/69 / EPEC), this protein is Ureidoacrylate amidohydrolase RutB.